The chain runs to 487 residues: Iron-sulfur cluster assembly SufBD family protein ycf24 (487 aa).

It belongs to the iron-sulfur cluster assembly SufBD family.

Its subcellular location is the plastid. It localises to the chloroplast. The polypeptide is Iron-sulfur cluster assembly SufBD family protein ycf24 (ycf24) (Pyropia yezoensis (Susabi-nori)).